Here is a 311-residue protein sequence, read N- to C-terminus: Tricarboxylate transport protein, mitochondrial (311 aa).

Positions 1–13 (MPAPRAPRALAAA) are cleaved as a propeptide — removed in mature form. Solcar repeat units lie at residues 23 to 111 (THPG…LSNH), 122 to 208 (TRGL…LRNW), and 218 to 303 (MNPL…VVKL). Transmembrane regions (helical) follow at residues 29–46 (ILAGGLAGGIEICITFPT), 86–105 (GLSSLLYGSIPKAAVRFGMF), and 129–143 (LGAGVAEAVVVVCPM). Serine 156 is subject to Phosphoserine. Transmembrane regions (helical) follow at residues 183–202 (GLTATVLKQGSNQAIRFFVM), 224–241 (GVFGAIAGAASVFGNTPL), and 278–297 (GTVPRLGRVCLDVAIVFVIY).

The protein belongs to the mitochondrial carrier (TC 2.A.29) family. Possesses a short cleavable presequence, which, however, is found to be dispensable both for targeting to mitochondria and insertion into the inner membrane. However, the presequence is required to keep SLC25A1 in a soluble state and thus in an import-competent state. Mature SLC25A1 lacking the presequence is prone to aggregation.

The protein resides in the mitochondrion inner membrane. The catalysed reaction is (S)-malate(in) + citrate(out) = (S)-malate(out) + citrate(in). The enzyme catalyses D-threo-isocitrate(in) + citrate(out) = D-threo-isocitrate(out) + citrate(in). It catalyses the reaction citrate(out) + succinate(in) = citrate(in) + succinate(out). It carries out the reaction cis-aconitate(in) + citrate(out) = cis-aconitate(out) + citrate(in). The catalysed reaction is trans-aconitate(in) + citrate(out) = trans-aconitate(out) + citrate(in). The enzyme catalyses phosphoenolpyruvate(in) + citrate(out) = phosphoenolpyruvate(out) + citrate(in). It catalyses the reaction maleate(in) + citrate(out) = maleate(out) + citrate(in). Mitochondrial electroneutral antiporter that exports citrate from the mitochondria into the cytosol in exchange for malate. Also able to mediate the exchange of citrate for isocitrate, phosphoenolpyruvate, cis-aconitate and to a lesser extent trans-aconitate, maleate and succinate. In the cytoplasm, citrate plays important roles in fatty acid and sterol synthesis, regulation of glycolysis, protein acetylation, and other physiopathological processes. This Homo sapiens (Human) protein is Tricarboxylate transport protein, mitochondrial (SLC25A1).